A 209-amino-acid polypeptide reads, in one-letter code: Ribosomal RNA small subunit methyltransferase G (209 aa).

Residues G74, F79, and R139 each coordinate S-adenosyl-L-methionine.

This sequence belongs to the methyltransferase superfamily. RNA methyltransferase RsmG family.

The protein localises to the cytoplasm. The catalysed reaction is guanosine(527) in 16S rRNA + S-adenosyl-L-methionine = N(7)-methylguanosine(527) in 16S rRNA + S-adenosyl-L-homocysteine. In terms of biological role, specifically methylates the N7 position of guanine in position 527 of 16S rRNA. In Halorhodospira halophila (strain DSM 244 / SL1) (Ectothiorhodospira halophila (strain DSM 244 / SL1)), this protein is Ribosomal RNA small subunit methyltransferase G.